The following is a 180-amino-acid chain: Cytokinin-beta-glucosidase 2 (180 aa).

In terms of biological role, hydrolyzes cytokinin glucosides thus liberating free cytokinins. The polypeptide is Cytokinin-beta-glucosidase 2 (ROLC2) (Linaria vulgaris (Toadflax)).